Consider the following 164-residue polypeptide: FMN reductase (NADH) RutF (164 aa).

Belongs to the non-flavoprotein flavin reductase family. RutF subfamily.

It catalyses the reaction FMNH2 + NAD(+) = FMN + NADH + 2 H(+). Catalyzes the reduction of FMN to FMNH2 which is used to reduce pyrimidine by RutA via the Rut pathway. In Klebsiella variicola (strain At-22), this protein is FMN reductase (NADH) RutF.